Consider the following 197-residue polypeptide: HTH-type transcriptional regulator BetI (197 aa).

The HTH tetR-type domain occupies 8 to 68 (PIRRQQLIEA…ATMGYIMSML (61 aa)). Residues 31–50 (SIALIARLAGVSNGIISHYF) constitute a DNA-binding region (H-T-H motif).

It functions in the pathway amine and polyamine biosynthesis; betaine biosynthesis via choline pathway [regulation]. Its function is as follows. Repressor involved in the biosynthesis of the osmoprotectant glycine betaine. It represses transcription of the choline transporter BetT and the genes of BetAB involved in the synthesis of glycine betaine. The chain is HTH-type transcriptional regulator BetI from Pseudomonas fluorescens (strain ATCC BAA-477 / NRRL B-23932 / Pf-5).